The chain runs to 187 residues: UPF0301 protein GOX1459 (187 aa).

The protein belongs to the UPF0301 (AlgH) family.

This Gluconobacter oxydans (strain 621H) (Gluconobacter suboxydans) protein is UPF0301 protein GOX1459.